The sequence spans 756 residues: Membrane-anchored protein 1 (756 aa).

The first 24 residues, 1–24 (MIRNTLAFLAILFLLIPTALLIIG), serve as a signal peptide directing secretion. Residues N52 and N64 are each glycosylated (N-linked (GlcNAc...) asparagine). 3 helical membrane passes run 91–111 (IISAFLSFLSAIFVFFSIFLV), 120–140 (IIVVFITTLLTCLAFAIELVL), and 148–168 (QSYVTAGAIGSDLIAILALCL). N190 is a glycosylation site (N-linked (GlcNAc...) asparagine). The tract at residues 281 to 328 (YDEFRKSESSPSRSSVLSTSKPEVHETEGYCPHKTGNRPGFPSLNIPR) is disordered. Low complexity predominate over residues 289 to 300 (SSPSRSSVLSTS). N-linked (GlcNAc...) asparagine glycosylation is found at N396 and N407. The interval 427-453 (EPPATRMPQTRSPVNDHSSFPSDLPIK) is disordered. Residues 433–447 (MPQTRSPVNDHSSFP) are compositionally biased toward polar residues. S438 carries the post-translational modification Phosphoserine. N-linked (GlcNAc...) asparagine glycans are attached at residues N459, N470, N471, N496, N497, N521, N522, N547, N548, N573, N574, N594, N598, N599, N618, N623, N649, N664, N676, and N685. Residues 482–650 (MLKNVGNGPR…MPTSPNSRNN (169 aa)) form a disordered region. The segment covering 485-520 (NVGNGPRNAPRNNSSNNLHAQGGMPMNMRGPRGAPR) has biased composition (low complexity). 3 stretches are compositionally biased toward polar residues: residues 593–605 (RNTSRNNSSSEFN), 617–629 (RNASRSNSSTDLF), and 640–650 (GMPTSPNSRNN). A compositionally biased stretch (polar residues) spans 686–697 (GSRNPSHGSLNT). Residues 686–713 (GSRNPSHGSLNTAHAGMGYGPRSMMRDP) form a disordered region. N715 is a glycosylation site (N-linked (GlcNAc...) asparagine). Residues 735 to 756 (FELPVRGNRNNRRGPGGNRMIR) are disordered.

The protein to yeast YOL019W and YMR063W.

It is found in the cell membrane. Its subcellular location is the cell tip. Functionally, required for correct cell separation at high temperatures. The polypeptide is Membrane-anchored protein 1 (mac1) (Schizosaccharomyces pombe (strain 972 / ATCC 24843) (Fission yeast)).